The sequence spans 439 residues: Putative porin QuiX (439 aa).

An N-terminal signal peptide occupies residues 1-22; sequence MRHFFKLGLVSAAVLGSQMTLA.

This sequence belongs to the OprB family.

The protein resides in the cell outer membrane. Functionally, could be involved in the transport of quinate or shikimate. This is Putative porin QuiX (quiX) from Acinetobacter baylyi (strain ATCC 33305 / BD413 / ADP1).